We begin with the raw amino-acid sequence, 221 residues long: PKHD-type hydroxylase NATL1_16191 (221 aa).

A Fe2OG dioxygenase domain is found at leucine 80–serine 174. The Fe cation site is built by histidine 98, aspartate 100, and histidine 155. Arginine 165 contributes to the 2-oxoglutarate binding site.

Requires Fe(2+) as cofactor. It depends on L-ascorbate as a cofactor.

This chain is PKHD-type hydroxylase NATL1_16191, found in Prochlorococcus marinus (strain NATL1A).